The chain runs to 138 residues: Large ribosomal subunit protein uL16 (138 aa).

Belongs to the universal ribosomal protein uL16 family. Part of the 50S ribosomal subunit.

In terms of biological role, binds 23S rRNA and is also seen to make contacts with the A and possibly P site tRNAs. The polypeptide is Large ribosomal subunit protein uL16 (Chlamydia trachomatis serovar D (strain ATCC VR-885 / DSM 19411 / UW-3/Cx)).